We begin with the raw amino-acid sequence, 88 residues long: Small ribosomal subunit protein bS16c (88 aa).

This sequence belongs to the bacterial ribosomal protein bS16 family.

The protein resides in the plastid. It localises to the chloroplast. This chain is Small ribosomal subunit protein bS16c, found in Calycanthus floridus var. glaucus (Eastern sweetshrub).